The following is a 506-amino-acid chain: Anaerobic nitric oxide reductase transcription regulator NorR (506 aa).

Asp57 bears the 4-aspartylphosphate mark. The Sigma-54 factor interaction domain occupies 187-416 (MIGLSPAMTQ…LEHAIHRAVV (230 aa)). Residues 215–222 (GETGTGKE) and 278–287 (ADNGTLFLDE) contribute to the ATP site. The H-T-H motif DNA-binding region spans 481 to 500 (WAASARALETDVANLHRLAK).

It participates in nitrogen metabolism; nitric oxide reduction. Its function is as follows. Required for the expression of anaerobic nitric oxide (NO) reductase, acts as a transcriptional activator for at least the norVW operon. Activation also requires sigma-54. This is Anaerobic nitric oxide reductase transcription regulator NorR from Salmonella schwarzengrund (strain CVM19633).